A 287-amino-acid polypeptide reads, in one-letter code: Protease HtpX (287 aa).

Helical transmembrane passes span 4–24 and 33–53; these read VFLLIATNLAILLVASIVMSI and GGLLVFAAIFGFGGSFISLAI. Residue His139 participates in Zn(2+) binding. Glu140 is an active-site residue. A Zn(2+)-binding site is contributed by His143. The next 2 membrane-spanning stretches (helical) occupy residues 154–174 and 195–215; these read LIQGVVNTFVIFAARVVAGII and GVVFVLDMLFGILASIIVAYF. A Zn(2+)-binding site is contributed by Glu220.

Belongs to the peptidase M48B family. Zn(2+) serves as cofactor.

Its subcellular location is the cell inner membrane. This chain is Protease HtpX, found in Shewanella denitrificans (strain OS217 / ATCC BAA-1090 / DSM 15013).